A 397-amino-acid chain; its full sequence is Ribosomal RNA large subunit methyltransferase I (397 aa).

The PUA domain occupies 2 to 78 (TPAIYLVKGR…EQEPIDRDFF (77 aa)).

This sequence belongs to the methyltransferase superfamily. RlmI family.

It localises to the cytoplasm. The enzyme catalyses cytidine(1962) in 23S rRNA + S-adenosyl-L-methionine = 5-methylcytidine(1962) in 23S rRNA + S-adenosyl-L-homocysteine + H(+). Functionally, specifically methylates the cytosine at position 1962 (m5C1962) of 23S rRNA. The sequence is that of Ribosomal RNA large subunit methyltransferase I from Vibrio cholerae serotype O1 (strain ATCC 39541 / Classical Ogawa 395 / O395).